We begin with the raw amino-acid sequence, 404 residues long: Ubiquitin-like modifier-activating enzyme 5 (404 aa).

Position 45 is a phosphoserine (serine 45). 5 residues coordinate ATP: glycine 83, aspartate 104, lysine 127, asparagine 150, and asparagine 184. Zn(2+) is bound by residues cysteine 226 and cysteine 229. Cysteine 250 acts as the Glycyl thioester intermediate in catalysis. Cysteine 303 and cysteine 308 together coordinate Zn(2+). Positions 334-346 (IIHEDNEWGIELV) match the UFM1-interacting sequence (UIS) motif. The linker stretch occupies residues 347-377 (SEVSEEELKNFSGPVPDLPEGITVAYTIPKK). A phosphoserine mark is found at serine 358 and serine 393. The short motif at 389–404 (DSGESLEDLMAKMKNM) is the UFC1-binding sequence (UFC) element.

This sequence belongs to the ubiquitin-activating E1 family. UBA5 subfamily. In terms of assembly, homodimer; homodimerization is required for UFM1 activation. Interacts (via UIS motif) with UFM1; binds UFM1 via a trans-binding mechanism in which UFM1 interacts with distinct sites in both subunits of the UBA5 homodimer. Interacts (via C-terminus) with UFC1. Interacts (via UIS motif) with GABARAPL2 and, with lower affinity, with GABARAP and GABARAPL1. In terms of tissue distribution, widely expressed.

The protein localises to the cytoplasm. It is found in the nucleus. The protein resides in the endoplasmic reticulum membrane. It localises to the golgi apparatus. E1-like enzyme which specifically catalyzes the first step in ufmylation. Activates UFM1 by first adenylating its C-terminal glycine residue with ATP, and thereafter linking this residue to the side chain of a cysteine residue in E1, yielding a UFM1-E1 thioester and free AMP. Activates UFM1 via a trans-binding mechanism, in which UFM1 interacts with distinct sites in both subunits of the UBA5 homodimer. Trans-binding also promotes stabilization of the UBA5 homodimer, and enhances ATP-binding. Transfer of UFM1 from UBA5 to the E2-like enzyme UFC1 also takes place using a trans mechanism. Ufmylation plays a key role in various processes, such as ribosome recycling, response to DNA damage, interferon response or reticulophagy (also called ER-phagy). Ufmylation is essential for erythroid differentiation of both megakaryocytes and erythrocytes. The protein is Ubiquitin-like modifier-activating enzyme 5 of Homo sapiens (Human).